The following is a 228-amino-acid chain: Large ribosomal subunit protein uL3 (228 aa).

This sequence belongs to the universal ribosomal protein uL3 family. In terms of assembly, part of the 50S ribosomal subunit. Forms a cluster with proteins L14 and L19.

In terms of biological role, one of the primary rRNA binding proteins, it binds directly near the 3'-end of the 23S rRNA, where it nucleates assembly of the 50S subunit. The sequence is that of Large ribosomal subunit protein uL3 from Leuconostoc mesenteroides subsp. mesenteroides (strain ATCC 8293 / DSM 20343 / BCRC 11652 / CCM 1803 / JCM 6124 / NCDO 523 / NBRC 100496 / NCIMB 8023 / NCTC 12954 / NRRL B-1118 / 37Y).